The following is a 624-amino-acid chain: DNA mismatch repair protein MutL (624 aa).

Positions 360 to 396 (GGNHFSQPAPRRETASTEPAVARERAPQPAYHSGSGY) are disordered. Over residues 369 to 385 (PRRETASTEPAVARERA) the composition is skewed to basic and acidic residues.

This sequence belongs to the DNA mismatch repair MutL/HexB family.

Functionally, this protein is involved in the repair of mismatches in DNA. It is required for dam-dependent methyl-directed DNA mismatch repair. May act as a 'molecular matchmaker', a protein that promotes the formation of a stable complex between two or more DNA-binding proteins in an ATP-dependent manner without itself being part of a final effector complex. This Serratia proteamaculans (strain 568) protein is DNA mismatch repair protein MutL.